We begin with the raw amino-acid sequence, 158 residues long: Large ribosomal subunit protein uL22 (158 aa).

The protein belongs to the universal ribosomal protein uL22 family. In terms of assembly, part of the 50S ribosomal subunit.

In terms of biological role, this protein binds specifically to 23S rRNA. It makes multiple contacts with different domains of the 23S rRNA in the assembled 50S subunit and ribosome. The globular domain of the protein is located near the polypeptide exit tunnel on the outside of the subunit, while an extended beta-hairpin is found that lines the wall of the exit tunnel in the center of the 70S ribosome. The sequence is that of Large ribosomal subunit protein uL22 from Haloquadratum walsbyi (strain DSM 16790 / HBSQ001).